A 160-amino-acid polypeptide reads, in one-letter code: Dysbindin domain-containing protein 1 (160 aa).

Disordered regions lie at residues 1–34 (MESPEGAGPGEITKEVKVPQAAPSVPAHETGDTC) and 95–160 (ADSD…PKED). Residues Ser3, Ser97, and Ser121 each carry the phosphoserine modification. Residues 127–143 (TRAEQNREKQTPSDPER) show a composition bias toward basic and acidic residues.

This sequence belongs to the dysbindin family.

The protein is Dysbindin domain-containing protein 1 (Dbndd1) of Rattus norvegicus (Rat).